The following is a 473-amino-acid chain: Ras-GEF domain-containing family member 1B (473 aa).

One can recognise an N-terminal Ras-GEF domain in the interval 34–161 (HDNNLLSGSL…NVQQMMQCLI (128 aa)). Positions 205 to 453 (DPYTLAQQLT…YLASYESEGP (249 aa)) constitute a Ras-GEF domain.

In terms of assembly, interacts with CCDC124 during cytokinesis. Interacts with Ras family proteins. In terms of tissue distribution, constitutively expressed in brain, intestine and testis. Low constitutive expression, if any, in heart, lung, lymph nodes and thymus. Up-regulated in heart, kidney, liver, lymph nodes, spleen and thymus at day 20 after infection with Trypanosoma cruzi. Not detected in muscle.

Its subcellular location is the early endosome. It is found in the late endosome. It localises to the midbody. Guanine nucleotide exchange factor (GEF) with specificity for RAP2A, it doesn't seems to activate other Ras family proteins (in vitro). This chain is Ras-GEF domain-containing family member 1B (Rasgef1b), found in Mus musculus (Mouse).